The following is a 188-amino-acid chain: D-glycero-beta-D-manno-heptose-1,7-bisphosphate 7-phosphatase (188 aa).

The Zn(2+) site is built by Cys-92, His-94, Cys-107, and Cys-109.

Belongs to the GmhB family.

The protein resides in the cytoplasm. The enzyme catalyses D-glycero-beta-D-manno-heptose 1,7-bisphosphate + H2O = D-glycero-beta-D-manno-heptose 1-phosphate + phosphate. The protein operates within nucleotide-sugar biosynthesis; ADP-L-glycero-beta-D-manno-heptose biosynthesis; ADP-L-glycero-beta-D-manno-heptose from D-glycero-beta-D-manno-heptose 7-phosphate: step 2/4. It functions in the pathway bacterial outer membrane biogenesis; LPS core biosynthesis. In terms of biological role, converts the D-glycero-beta-D-manno-heptose 1,7-bisphosphate intermediate into D-glycero-beta-D-manno-heptose 1-phosphate by removing the phosphate group at the C-7 position. This is D-glycero-beta-D-manno-heptose-1,7-bisphosphate 7-phosphatase (gmhB1) from Photorhabdus laumondii subsp. laumondii (strain DSM 15139 / CIP 105565 / TT01) (Photorhabdus luminescens subsp. laumondii).